The sequence spans 546 residues: SusD-like protein BACOVA_02651 (546 aa).

A signal peptide spans 1–21; that stretch reads MRIFMKSKLLVIATTALLFAA. Cysteine 22 carries the N-palmitoyl cysteine lipid modification. Cysteine 22 carries S-diacylglycerol cysteine lipidation.

The protein belongs to the SusD family.

The protein localises to the cell outer membrane. Its pathway is glucan metabolism; xyloglucan degradation. Its function is as follows. Polysaccharide-binding protein present at the surface of the cell. Probably mediates xyloglucan-binding before xyloglucan transport in the periplasm for degradation. The sequence is that of SusD-like protein BACOVA_02651 from Bacteroides ovatus (strain ATCC 8483 / DSM 1896 / JCM 5824 / BCRC 10623 / CCUG 4943 / NCTC 11153).